We begin with the raw amino-acid sequence, 97 residues long: Aspartyl/glutamyl-tRNA(Asn/Gln) amidotransferase subunit C (97 aa).

This sequence belongs to the GatC family. In terms of assembly, heterotrimer of A, B and C subunits.

The enzyme catalyses L-glutamyl-tRNA(Gln) + L-glutamine + ATP + H2O = L-glutaminyl-tRNA(Gln) + L-glutamate + ADP + phosphate + H(+). It carries out the reaction L-aspartyl-tRNA(Asn) + L-glutamine + ATP + H2O = L-asparaginyl-tRNA(Asn) + L-glutamate + ADP + phosphate + 2 H(+). In terms of biological role, allows the formation of correctly charged Asn-tRNA(Asn) or Gln-tRNA(Gln) through the transamidation of misacylated Asp-tRNA(Asn) or Glu-tRNA(Gln) in organisms which lack either or both of asparaginyl-tRNA or glutaminyl-tRNA synthetases. The reaction takes place in the presence of glutamine and ATP through an activated phospho-Asp-tRNA(Asn) or phospho-Glu-tRNA(Gln). This chain is Aspartyl/glutamyl-tRNA(Asn/Gln) amidotransferase subunit C, found in Synechococcus sp. (strain CC9902).